The sequence spans 311 residues: Urease accessory protein UreD (311 aa).

The protein belongs to the UreD family. UreD, UreF and UreG form a complex that acts as a GTP-hydrolysis-dependent molecular chaperone, activating the urease apoprotein by helping to assemble the nickel containing metallocenter of UreC. The UreE protein probably delivers the nickel.

Its subcellular location is the cytoplasm. Functionally, required for maturation of urease via the functional incorporation of the urease nickel metallocenter. This chain is Urease accessory protein UreD, found in Synechococcus sp. (strain CC9902).